A 345-amino-acid chain; its full sequence is Nuclear distribution protein nudE-like 1 (345 aa).

Residues 27–190 (KQTFQEARDE…LAVRERQQEV (164 aa)) are a coiled coil. The interval 56–166 (VQAEQRNRDL…LDEKESLLVS (111 aa)) is self-association. The segment at 64–189 (DLQADNQRLK…ELAVRERQQE (126 aa)) is interaction with KATNB1. Residues 114–133 (YVRELEQANDDLERAKRATI) form a required for interaction with PAFAH1B1 region. Residues 175-345 (RDLRQELAVR…SAPGMLPLSV (171 aa)) form an interaction with CENPF region. The tract at residues 189–256 (EVTRKSAPSS…SARISALNIV (68 aa)) is interaction with YWHAE. An interaction with NEFL region spans residues 191–345 (TRKSAPSSPT…SAPGMLPLSV (155 aa)). The interval 195–256 (APSSPTLDCE…SARISALNIV (62 aa)) is interaction with KATNA1. Serine 215 carries the post-translational modification Phosphoserine. Residues 217–240 (PATPVGKGTENSFPSPKAIPNGFG) are disordered. The residue at position 219 (threonine 219) is a Phosphothreonine; by CDK1 and MAPK1. The interaction with DISC1 stretch occupies residues 227 to 278 (NSFPSPKAIPNGFGTSPLTPSARISALNIVGDLLRKVGALESKLAACRNFAK). Serine 231 is subject to Phosphoserine. A Phosphoserine; by CDK1 modification is found at serine 242. Position 245 is a phosphothreonine; by CDK1 and MAPK1 (threonine 245). Residues 256–291 (VGDLLRKVGALESKLAACRNFAKDQASRKSYISGNV) form a required for localization to the centrosome and interaction with dynein, dynactin, tubulin gamma, PCM1 and PCNT region. A lipid anchor (S-palmitoyl cysteine; by ZDHHC2, ZDHHC3 and ZDHHC7) is attached at cysteine 273. Residues 316–345 (AVNGFDPAPPPPGLGSSRPLSAPGMLPLSV) are disordered. The segment covering 329–339 (LGSSRPLSAPG) has biased composition (low complexity). Serine 344 is modified (phosphoserine).

It belongs to the nudE family. As to quaternary structure, self-associates. Interacts with DISC1, dynein, dynactin, tubulin gamma, KATNA1, KATNB1, microtubules, PAFAH1B1, PCM1, PCNT, and YWHAE. Interacts directly with NEFL and indirectly with NEFH. Interacts (via C-terminus) with CENPF. Interacts with ZNF365. Interacts with PLEKHM1 (via N- and C-terminus). Interacts with GTP-bound RAB9A; the interaction may lead to RAB9A-dynein motor tethering. Phosphorylated in mitosis. Can be phosphorylated by CDK1, CDK5 and MAPK1. Phosphorylation by CDK5 promotes interaction with KATNA1 and YWHAE. Post-translationally, palmitoylation at Cys-273 reduces affinity for dynein. Expressed at low levels in heart, hypothalamus, liver, lung, spleen and stomach. Expressed at higher levels in testis and brain. Within the brain, expressed in cerebellum, cerebral stem, cortex and striatum.

It localises to the cytoplasm. Its subcellular location is the cytoskeleton. The protein resides in the microtubule organizing center. It is found in the centrosome. The protein localises to the chromosome. It localises to the centromere. Its subcellular location is the kinetochore. The protein resides in the spindle. In terms of biological role, required for organization of the cellular microtubule array and microtubule anchoring at the centrosome. May regulate microtubule organization at least in part by targeting the microtubule severing protein KATNA1 to the centrosome. Also positively regulates the activity of the minus-end directed microtubule motor protein dynein. May enhance dynein-mediated microtubule sliding by targeting dynein to the microtubule plus ends. Required for several dynein- and microtubule-dependent processes such as the maintenance of Golgi integrity, the centripetal motion of secretory vesicles and the coupling of the nucleus and centrosome. Also required during brain development for the migration of newly formed neurons from the ventricular/subventricular zone toward the cortical plate. Plays a role, together with DISC1, in the regulation of neurite outgrowth. Required for mitosis in some cell types but appears to be dispensible for mitosis in cortical neuronal progenitors, which instead requires NDE1. Facilitates the polymerization of neurofilaments from the individual subunits NEFH and NEFL. Positively regulates lysosome peripheral distribution and ruffled border formation in osteoclasts. Plays a role, together with DISC1, in the regulation of neurite outgrowth. May act as a RAB9A/B effector that tethers RAB9-associated late endosomes to the dynein motor for their retrograde transport to the trans-Golgi network. The protein is Nuclear distribution protein nudE-like 1 (NDEL1) of Oryctolagus cuniculus (Rabbit).